A 39-amino-acid chain; its full sequence is Photosystem II reaction center protein J (39 aa).

The chain crosses the membrane as a helical span at residues 9–29 (LWLVGLVGGFAVITIVSLFIY).

The protein belongs to the PsbJ family. In terms of assembly, PSII is composed of 1 copy each of membrane proteins PsbA, PsbB, PsbC, PsbD, PsbE, PsbF, PsbH, PsbI, PsbJ, PsbK, PsbL, PsbM, PsbT, PsbX, PsbY, PsbZ, Psb30/Ycf12, at least 3 peripheral proteins of the oxygen-evolving complex and a large number of cofactors. It forms dimeric complexes.

The protein localises to the plastid. The protein resides in the chloroplast thylakoid membrane. In terms of biological role, one of the components of the core complex of photosystem II (PSII). PSII is a light-driven water:plastoquinone oxidoreductase that uses light energy to abstract electrons from H(2)O, generating O(2) and a proton gradient subsequently used for ATP formation. It consists of a core antenna complex that captures photons, and an electron transfer chain that converts photonic excitation into a charge separation. This chain is Photosystem II reaction center protein J, found in Thalassiosira pseudonana (Marine diatom).